A 240-amino-acid chain; its full sequence is Ubiquinone biosynthesis O-methyltransferase (240 aa).

Arg44, Gly64, Asp85, and Met129 together coordinate S-adenosyl-L-methionine.

This sequence belongs to the methyltransferase superfamily. UbiG/COQ3 family.

The enzyme catalyses a 3-demethylubiquinol + S-adenosyl-L-methionine = a ubiquinol + S-adenosyl-L-homocysteine + H(+). It carries out the reaction a 3-(all-trans-polyprenyl)benzene-1,2-diol + S-adenosyl-L-methionine = a 2-methoxy-6-(all-trans-polyprenyl)phenol + S-adenosyl-L-homocysteine + H(+). Its pathway is cofactor biosynthesis; ubiquinone biosynthesis. In terms of biological role, O-methyltransferase that catalyzes the 2 O-methylation steps in the ubiquinone biosynthetic pathway. This Escherichia coli O6:K15:H31 (strain 536 / UPEC) protein is Ubiquinone biosynthesis O-methyltransferase.